A 473-amino-acid chain; its full sequence is Pyruvate kinase (473 aa).

A substrate-binding site is contributed by Arg32. Residues Asn34, Ser36, Asp66, and Thr67 each coordinate K(+). An ATP-binding site is contributed by 34-37 (NFSH). Residues Arg73 and Lys155 each contribute to the ATP site. Glu221 serves as a coordination point for Mg(2+). Gly244, Asp245, and Thr277 together coordinate substrate. Residue Asp245 coordinates Mg(2+).

Belongs to the pyruvate kinase family. As to quaternary structure, homotetramer. Mg(2+) is required as a cofactor. It depends on K(+) as a cofactor.

It carries out the reaction pyruvate + ATP = phosphoenolpyruvate + ADP + H(+). Its pathway is carbohydrate degradation; glycolysis; pyruvate from D-glyceraldehyde 3-phosphate: step 5/5. The polypeptide is Pyruvate kinase (pyk) (Clostridium acetobutylicum (strain ATCC 824 / DSM 792 / JCM 1419 / IAM 19013 / LMG 5710 / NBRC 13948 / NRRL B-527 / VKM B-1787 / 2291 / W)).